The sequence spans 535 residues: Keratin, type II cytoskeletal 79 (535 aa).

2 stretches are compositionally biased toward polar residues: residues 1 to 12 (MRSSVSRQTYST) and 28 to 38 (QARTSFSSVTV). Positions 1–53 (MRSSVSRQTYSTKGAFSSSSASGGGGSQARTSFSSVTVSRNSGRGGGPRCGPS) are disordered. The segment at 1 to 141 (MRSSVSRQTY…DPEIQRVRTE (141 aa)) is head. Over residues 43-53 (GRGGGPRCGPS) the composition is skewed to gly residues. The tract at residues 142–177 (EREQIKTLNNKFASFIDKVRFLEQQNKVLETKWALL) is coil 1A. The 316-residue stretch at 142 to 457 (EREQIKTLNN…KLLESEESRM (316 aa)) folds into the IF rod domain. The segment at 178–198 (QEQGQKSGVTRNNLEPLFEHF) is linker 1. The segment at 199–290 (INNLRGKLDN…HLYEEELSQV (92 aa)) is coil 1B. The interval 291 to 314 (QTHVSDTSVILSMDNNRNLDLDSI) is linker 12. The coil 2 stretch occupies residues 315-453 (IAEVKAQYEQ…ATYRKLLESE (139 aa)). The segment at 454-535 (ESRMSGECPS…TTVKTSSRRY (82 aa)) is tail.

Belongs to the intermediate filament family. Heterotetramer of two type I and two type II keratins.

This chain is Keratin, type II cytoskeletal 79 (KRT79), found in Bos taurus (Bovine).